The following is a 60-amino-acid chain: Mastoparan-VB1 (60 aa).

Residues 1-23 (MKNTILLLFTAFIFLSGFFGMSA) form the signal peptide. Residues 24 to 45 (EALADPKADPLAGPFPDADPDP) constitute a propeptide that is removed on maturation. 4 AXPX repeats span residues 27–30 (ADPK), 31–34 (ADPL), 35–38 (AGPF), and 40–43 (DADP). Leucine amide is present on Leu59.

Expressed by the venom gland.

The protein resides in the secreted. It is found in the target cell membrane. In terms of biological role, antimicrobial peptide. Shows activity against both Gram-positive (S.aureus MIC=1.9-3.75 ug/ml) and -negative (E.coli MIC=15-60 ug/ml) bacteria, as well against fungi (C.albicans MIC=15 ug/ml). Also promotes moderate mast cell degranulation. Does not show hemolytic activity on rabbit and human erythrocytes. Its mast cell degranulation activity may be related to the activation of G-protein coupled receptors in mast cells as well as interaction with other proteins located in cell endosomal membranes in the mast cells. This Vespa bicolor (Black shield wasp) protein is Mastoparan-VB1.